We begin with the raw amino-acid sequence, 308 residues long: Ribosomal RNA large subunit methyltransferase F (308 aa).

Belongs to the methyltransferase superfamily. METTL16/RlmF family.

Its subcellular location is the cytoplasm. The enzyme catalyses adenosine(1618) in 23S rRNA + S-adenosyl-L-methionine = N(6)-methyladenosine(1618) in 23S rRNA + S-adenosyl-L-homocysteine + H(+). Specifically methylates the adenine in position 1618 of 23S rRNA. This chain is Ribosomal RNA large subunit methyltransferase F, found in Salmonella arizonae (strain ATCC BAA-731 / CDC346-86 / RSK2980).